The chain runs to 300 residues: GTPase Era (300 aa).

One can recognise an Era-type G domain in the interval 5–176 (RSGFVCLIGR…IDVLAAALPP (172 aa)). The segment at 13-20 (GRPNTGKS) is G1. 13–20 (GRPNTGKS) serves as a coordination point for GTP. The G2 stretch occupies residues 39-43 (QTTRH). Residues 61–64 (DTPG) form a G3 region. GTP-binding positions include 61-65 (DTPGL) and 125-128 (TKID). Positions 125–128 (TKID) are G4. The segment at 155-157 (VSA) is G5. Residues 207-286 (VHDELPHSLA…YLDLHVNVAK (80 aa)) form the KH type-2 domain.

It belongs to the TRAFAC class TrmE-Era-EngA-EngB-Septin-like GTPase superfamily. Era GTPase family. In terms of assembly, monomer.

The protein resides in the cell envelope. It localises to the secreted. The protein localises to the cell wall. Exhibits GTPase activity. Binds RNA but is probably not involved in ribosome assembly in mycobacteria. In Mycobacterium leprae (strain TN), this protein is GTPase Era.